The sequence spans 218 residues: Octanoyltransferase (218 aa).

The BPL/LPL catalytic domain occupies 30 to 213 (GEIEDTLILV…YFSEVFNYDI (184 aa)). Residues 75–82 (RGGDVTYH), 143–145 (AIG), and 156–158 (GFA) contribute to the substrate site. Catalysis depends on Cys-174, which acts as the Acyl-thioester intermediate.

It belongs to the LipB family.

It is found in the cytoplasm. It carries out the reaction octanoyl-[ACP] + L-lysyl-[protein] = N(6)-octanoyl-L-lysyl-[protein] + holo-[ACP] + H(+). It functions in the pathway protein modification; protein lipoylation via endogenous pathway; protein N(6)-(lipoyl)lysine from octanoyl-[acyl-carrier-protein]: step 1/2. Its function is as follows. Catalyzes the transfer of endogenously produced octanoic acid from octanoyl-acyl-carrier-protein onto the lipoyl domains of lipoate-dependent enzymes. Lipoyl-ACP can also act as a substrate although octanoyl-ACP is likely to be the physiological substrate. The chain is Octanoyltransferase from Alkaliphilus metalliredigens (strain QYMF).